Reading from the N-terminus, the 191-residue chain is Flagellar transcriptional regulator FlhC (191 aa).

Cysteine 139, cysteine 142, cysteine 159, and cysteine 162 together coordinate Zn(2+).

The protein belongs to the FlhC family. In terms of assembly, heterohexamer composed of two FlhC and four FlhD subunits. Each FlhC binds a FlhD dimer, forming a heterotrimer, and a hexamer assembles by dimerization of two heterotrimers. Requires Zn(2+) as cofactor.

The protein resides in the cytoplasm. Its function is as follows. Functions in complex with FlhD as a master transcriptional regulator that regulates transcription of several flagellar and non-flagellar operons by binding to their promoter region. Activates expression of class 2 flagellar genes, including fliA, which is a flagellum-specific sigma factor that turns on the class 3 genes. Also regulates genes whose products function in a variety of physiological pathways. The sequence is that of Flagellar transcriptional regulator FlhC from Enterobacter cloacae subsp. cloacae (strain ATCC 13047 / DSM 30054 / NBRC 13535 / NCTC 10005 / WDCM 00083 / NCDC 279-56).